The chain runs to 367 residues: Heme A synthase (367 aa).

5 helical membrane passes run 25-45 (ALRFWLGFVLLALFCLVLVGG), 111-131 (LIARAIGVIFALPLIYFWLTG), 139-159 (WPLVGILALGGLQGGIGWWMV), 174-194 (LATHLVMACLIFAGCMWIMRG), and 210-230 (GFAAAIAIFSLFQIYLGALVA). His274 provides a ligand contact to heme. 3 helical membrane-spanning segments follow: residues 276–296 (IGAYTLFALTLINMVIALRAA), 305–325 (AILLFVLVTLQAAIGIATLLM), and 327–347 (VPLHWGLLHQAGALVVFGFAV). Position 335 (His335) interacts with heme.

The protein belongs to the COX15/CtaA family. Type 2 subfamily. In terms of assembly, interacts with CtaB. Heme b serves as cofactor.

The protein resides in the cell membrane. The catalysed reaction is Fe(II)-heme o + 2 A + H2O = Fe(II)-heme a + 2 AH2. It functions in the pathway porphyrin-containing compound metabolism; heme A biosynthesis; heme A from heme O: step 1/1. Catalyzes the conversion of heme O to heme A by two successive hydroxylations of the methyl group at C8. The first hydroxylation forms heme I, the second hydroxylation results in an unstable dihydroxymethyl group, which spontaneously dehydrates, resulting in the formyl group of heme A. The polypeptide is Heme A synthase (Rhizobium johnstonii (strain DSM 114642 / LMG 32736 / 3841) (Rhizobium leguminosarum bv. viciae)).